A 163-amino-acid chain; its full sequence is Large ribosomal subunit protein uL15 (163 aa).

Residues 27-37 (SGLGKTAGRGQ) show a composition bias toward gly residues. The interval 27 to 46 (SGLGKTAGRGQKGQKSRSGV) is disordered.

The protein belongs to the universal ribosomal protein uL15 family. In terms of assembly, part of the 50S ribosomal subunit.

Functionally, binds to the 23S rRNA. The polypeptide is Large ribosomal subunit protein uL15 (Zymomonas mobilis subsp. mobilis (strain ATCC 31821 / ZM4 / CP4)).